A 495-amino-acid chain; its full sequence is GTPase Der (495 aa).

In terms of domain architecture, EngA-type G 1 spans 3-178 (AKIALVGRPN…EMRDLLPEED (176 aa)). Residues 9 to 16 (GRPNVGKS), 57 to 61 (DTGGI), and 130 to 133 (NKVD) contribute to the GTP site. The disordered stretch occupies residues 190 to 227 (TAVASADADVDADVETEGGTSASETEEGITEETVEDEP). The segment covering 213-227 (ETEEGITEETVEDEP) has biased composition (acidic residues). The EngA-type G 2 domain occupies 231-404 (LRLCMLGRPN…LAARIRRECS (174 aa)). Residues 237 to 244 (GRPNAGKS), 284 to 288 (DTAGV), and 349 to 352 (NKMD) each bind GTP. A KH-like domain is found at 405–489 (VRIPTGQLNR…PMRVHFRSSH (85 aa)).

This sequence belongs to the TRAFAC class TrmE-Era-EngA-EngB-Septin-like GTPase superfamily. EngA (Der) GTPase family. Associates with the 50S ribosomal subunit.

Its function is as follows. GTPase that plays an essential role in the late steps of ribosome biogenesis. This is GTPase Der from Nitratidesulfovibrio vulgaris (strain DP4) (Desulfovibrio vulgaris).